A 229-amino-acid polypeptide reads, in one-letter code: Transmembrane emp24 domain-containing protein 5 (229 aa).

The signal sequence occupies residues 1 to 27; it reads MGDKIWLPFPVLLLAALPPVLLPGAAG. The Lumenal segment spans residues 28–196; it reads FTPSLDSDFT…IQESNFDRVN (169 aa). Positions 45–126 constitute a GOLD domain; sequence KECFYQPMPL…EKVIFFELIL (82 aa). A helical membrane pass occupies residues 197–217; the sequence is FWSMVNLVVMVVVSAIQVYML. Over 218-229 the chain is Cytoplasmic; the sequence is KSLFEDKRKSRT.

This sequence belongs to the EMP24/GP25L family. Interacts with TMED9 and TMED10.

The protein resides in the endoplasmic reticulum membrane. It localises to the golgi apparatus. Its subcellular location is the cis-Golgi network membrane. It is found in the endoplasmic reticulum-Golgi intermediate compartment membrane. In terms of biological role, potential role in vesicular protein trafficking, mainly in the early secretory pathway. Required for the maintenance of the Golgi apparatus; involved in protein exchange between Golgi stacks during assembly. Probably not required for COPI-vesicle-mediated retrograde transport. The protein is Transmembrane emp24 domain-containing protein 5 (TMED5) of Homo sapiens (Human).